Consider the following 244-residue polypeptide: Glucosamine-6-phosphate deaminase (244 aa).

Residue aspartate 67 is the Proton acceptor; for enolization step of the active site. The active-site For ring-opening step is the asparagine 136. Residue histidine 138 is the Proton acceptor; for ring-opening step of the active site. Glutamate 143 functions as the For ring-opening step in the catalytic mechanism.

The protein belongs to the glucosamine/galactosamine-6-phosphate isomerase family. NagB subfamily.

It carries out the reaction alpha-D-glucosamine 6-phosphate + H2O = beta-D-fructose 6-phosphate + NH4(+). Its pathway is amino-sugar metabolism; N-acetylneuraminate degradation; D-fructose 6-phosphate from N-acetylneuraminate: step 5/5. Catalyzes the reversible isomerization-deamination of glucosamine 6-phosphate (GlcN6P) to form fructose 6-phosphate (Fru6P) and ammonium ion. In Clostridium botulinum (strain Loch Maree / Type A3), this protein is Glucosamine-6-phosphate deaminase.